We begin with the raw amino-acid sequence, 241 residues long: Small ribosomal subunit protein uS2 (241 aa).

It belongs to the universal ribosomal protein uS2 family.

The polypeptide is Small ribosomal subunit protein uS2 (Photorhabdus laumondii subsp. laumondii (strain DSM 15139 / CIP 105565 / TT01) (Photorhabdus luminescens subsp. laumondii)).